Here is a 44-residue protein sequence, read N- to C-terminus: Cytochrome b559 subunit beta (44 aa).

The helical transmembrane segment at 19-35 (WLSIHALAVPTIFFLGS) threads the bilayer. Histidine 23 serves as a coordination point for heme.

It belongs to the PsbE/PsbF family. As to quaternary structure, heterodimer of an alpha subunit and a beta subunit. PSII is composed of 1 copy each of membrane proteins PsbA, PsbB, PsbC, PsbD, PsbE, PsbF, PsbH, PsbI, PsbJ, PsbK, PsbL, PsbM, PsbT, PsbX, PsbY, PsbZ, Psb30/Ycf12, at least 3 peripheral proteins of the oxygen-evolving complex and a large number of cofactors. It forms dimeric complexes. It depends on heme b as a cofactor.

It is found in the plastid. It localises to the chloroplast thylakoid membrane. In terms of biological role, this b-type cytochrome is tightly associated with the reaction center of photosystem II (PSII). PSII is a light-driven water:plastoquinone oxidoreductase that uses light energy to abstract electrons from H(2)O, generating O(2) and a proton gradient subsequently used for ATP formation. It consists of a core antenna complex that captures photons, and an electron transfer chain that converts photonic excitation into a charge separation. In Tetradesmus obliquus (Green alga), this protein is Cytochrome b559 subunit beta.